A 465-amino-acid polypeptide reads, in one-letter code: U4/U6 small nuclear ribonucleoprotein PRP4 (465 aa).

7 WD repeats span residues 173-212 (VSTKPISAVSLSTDDMVVATGSWAGDLQVLNSQTLQPLTQ), 216-256 (SHVG…GGLR), 263-302 (GHERRISDVKYHPSGKFIGSASHDMTWRLWDASTHQELLL), 305-344 (GHDKGVFSLSFQCDGSLVCSGGMDSLSMLWDIRSGSKVMT), 347-386 (GHSKPIYTVAWSPNGYQVATGGGDGIINVWDIRKRDEGQL), 391-432 (AHRN…KMGS), and 435-464 (GHTDKIISLDISNNSHFLVSGGWDRSIKLW).

Component of the U4/U6-U5 tri-snRNP complex composed of the U4, U6 and U5 snRNAs and at least PRP3, PRP4, PRP6, PRP8, PRP18, PRP31, PRP38, SNU13, SNU23, SNU66, SNU114, SPP381, SMB1, SMD1, SMD2, SMD3, SMX2, SMX3, LSM2, LSM3, LSM4, LSM5, LSM6, LSM7, LSM8, BRR2 and DIB1.

Its subcellular location is the nucleus. Involved in RNA splicing. Is required for the association of U4/U6 snRNP with U5 snRNP in an early step of spliceosome assembly. In Saccharomyces cerevisiae (strain ATCC 204508 / S288c) (Baker's yeast), this protein is U4/U6 small nuclear ribonucleoprotein PRP4 (PRP4).